The primary structure comprises 393 residues: Ninja-family protein 1 (393 aa).

2 disordered regions span residues 1–27 and 155–200; these read MEGFSRDLLCGIGKGDAPPPEKRPGQL and NDDW…KEMN. Over residues 156 to 170 the composition is skewed to basic and acidic residues; the sequence is DDWKKRKEAQSLKRL.

It belongs to the Ninja family.

It localises to the nucleus. The sequence is that of Ninja-family protein 1 from Zea mays (Maize).